Here is a 493-residue protein sequence, read N- to C-terminus: Monodehydroascorbate reductase, chloroplastic/mitochondrial (493 aa).

A chloroplast and mitochondrion-targeting transit peptide spans 1-51 (MSAVRRVMALASTTLPTKSGLSLWCPSSPSLARRFPARFSPIGSRIASRSL). Residues 68–71 (GGNA), Glu-95, Arg-102, Lys-107, and 201–202 (RE) contribute to the FAD site. Residues 224–230 (GGYIGME), Glu-248, Arg-254, and Gly-313 each bind NAD(+). 226–230 (YIGME) contacts NADP(+). Arg-254 and Gly-313 together coordinate NADP(+). Asp-351 contributes to the FAD binding site. Residue 367 to 368 (EH) participates in NAD(+) binding. 367–368 (EH) is an NADP(+) binding site. Val-369 is an FAD binding site. Arg-373 is an L-ascorbate binding site. Tyr-398 is a binding site for FAD. NAD(+) is bound at residue Tyr-398. An NADP(+)-binding site is contributed by Tyr-398. L-ascorbate is bound at residue Arg-400.

This sequence belongs to the FAD-dependent oxidoreductase family. As to quaternary structure, interacts in vitro with TRXy. FAD serves as cofactor.

The protein localises to the plastid. Its subcellular location is the chloroplast. It localises to the mitochondrion. It carries out the reaction 2 monodehydro-L-ascorbate radical + NADH + H(+) = 2 L-ascorbate + NAD(+). It catalyses the reaction 2,4,6-trinitrotoluene + NADH = 2,4,6-trinitrotoluene radical + e(-) + NAD(+). Redox regulation of the activity by thioredoxin TRXy1. Catalyzes the conversion of monodehydroascorbate (MDA) to ascorbate, oxidizing NADH in the process. Mediates phytotoxicity of 2,4,6-trinitrotoluene (TNT), an explosive and environmental pollutant, by reducing TNT and forming a nitro radical that spontaneously reacts with atmospheric oxygen, generating reactive superoxide. Can also use 1-chloro-2,4-dinitrobenzene (CDNB) as substrate, but not 1-chloro-4-nitrobenzene (CNB). The chain is Monodehydroascorbate reductase, chloroplastic/mitochondrial from Arabidopsis thaliana (Mouse-ear cress).